We begin with the raw amino-acid sequence, 380 residues long: Alpha-N-acetylneuraminate alpha-2,8-sialyltransferase ST8SIA3 (380 aa).

Residues 1-9 are Cytoplasmic-facing; that stretch reads MRNCKMARV. A helical; Signal-anchor for type II membrane protein membrane pass occupies residues 10-33; it reads ASVLGLVMLSVALLILSLISYVSL. Topologically, residues 34–380 are lumenal; sequence KKENIFTTPK…LTKLTLSHCA (347 aa). N-linked (GlcNAc...) asparagine glycans are attached at residues N93, N113, and N160. Cystine bridges form between C162-C313 and C176-C379. Residues N167 and N190 each coordinate CMP-N-acetyl-beta-neuraminate. N-linked (GlcNAc...) asparagine glycosylation is present at N206. CMP-N-acetyl-beta-neuraminate contacts are provided by S300, T301, G302, W322, Y336, and H337. The Proton donor/acceptor role is filled by H354.

It belongs to the glycosyltransferase 29 family. As to quaternary structure, homodimer. In terms of processing, autopolysialylated. In terms of tissue distribution, expressed in fetal and adult brain and fetal liver.

The protein localises to the golgi apparatus membrane. The catalysed reaction is [N-acetyl-alpha-D-neuraminosyl-(2-&gt;8)](n) + CMP-N-acetyl-beta-neuraminate = [N-acetyl-alpha-D-neuraminosyl-(2-&gt;8)](n+1) + CMP + H(+). It carries out the reaction alpha-Neu5Ac-(2-&gt;3)-beta-D-Gal-(1-&gt;4)-6S-D-GlcNAc + CMP-N-acetyl-beta-neuraminate = alpha-Neu5Ac-(2-&gt;8)-alpha-Neu5Ac-(2-&gt;3)-beta-D-Gal-(1-&gt;4)-6S-D-GlcNAc + CMP + H(+). It catalyses the reaction a ganglioside GM3 (d18:1(4E)) + CMP-N-acetyl-beta-neuraminate = a ganglioside GD3 (d18:1(4E)) + CMP + H(+). The enzyme catalyses a ganglioside GM3 + CMP-N-acetyl-beta-neuraminate = a ganglioside GD3 + CMP + H(+). The catalysed reaction is an N-acetyl-alpha-neuraminyl-(2-&gt;3)-beta-D-galactosyl derivative + CMP-N-acetyl-beta-neuraminate = an N-acetyl-alpha-neuraminyl-(2-&gt;8)-N-acetyl-alpha-neuraminyl-(2-&gt;3)-beta-D-galactosyl derivative + CMP + H(+). It carries out the reaction an N-acetyl-alpha-neuraminyl-(2-&gt;3)-beta-D-galactosyl-(1-&gt;4)-N-acetyl-beta-D-glucosaminyl derivative + CMP-N-acetyl-beta-neuraminate = an alpha-Neu5Ac-(2-&gt;8)-alpha-Neu5Ac-(2-&gt;3)-beta-D-Gal-(1-&gt;4)-beta-D-GlcNAc derivative + CMP + H(+). Its pathway is protein modification; protein glycosylation. Catalyzes the transfer of sialic acid from a CMP-linked sialic acid donor onto a terminal alpha-2,3-, alpha-2,6-, or alpha-2,8-linked sialic acid of an acceptor, such as N-linked oligosaccharides of glycoproteins and glycolipids through alpha-2,8-linkages. Forms oligosialic and polysialic acid on various sialylated N-acetyllactosamine oligosaccharides of glycoproteins, including FETUB N-glycans, a2-HS-glycoprotein (AHSG) and alpha 2,3-sialylated glycosphingolipids, such as alpha 2,3-sialylparagloboside and ganglioside GM3 and to a lesser extent NCAM1 N-glycans. However, it is much more specific to N-linked oligosaccharides of glycoproteins than glycosphingolipids. 2,3-sialylparagloboside serves as the best acceptor substrate among the glycolipids. alpha-Neu5Ac-(2-&gt;8)-alpha-Neu5Ac-(2-&gt;3)-beta-D-Gal-(1-&gt;4)-6S-D-GlcNAc and monosialyl and disialyl N-acetyllactosamines are the best acceptor substrates among glycoproteins. May plays critical role in the striatum by mediating the formation of disialylated and trisialylated terminal glycotopes on N- and O-glycans of specific striatal proteins, regulating their distribution in lipid rafts, affecting their interaction with other binding partners, and subsequently modulating striatal functions. The protein is Alpha-N-acetylneuraminate alpha-2,8-sialyltransferase ST8SIA3 of Homo sapiens (Human).